A 430-amino-acid polypeptide reads, in one-letter code: Trigger factor (430 aa).

Positions 163–248 (GDIAVIDFEG…LNSLKRKNMP (86 aa)) constitute a PPIase FKBP-type domain.

It belongs to the FKBP-type PPIase family. Tig subfamily.

The protein resides in the cytoplasm. The catalysed reaction is [protein]-peptidylproline (omega=180) = [protein]-peptidylproline (omega=0). Involved in protein export. Acts as a chaperone by maintaining the newly synthesized protein in an open conformation. Functions as a peptidyl-prolyl cis-trans isomerase. This Brevibacillus brevis (strain 47 / JCM 6285 / NBRC 100599) protein is Trigger factor.